Reading from the N-terminus, the 210-residue chain is Thymidylate kinase (210 aa).

10 to 17 lines the ATP pocket; it reads GLEGAGKS.

Belongs to the thymidylate kinase family.

The enzyme catalyses dTMP + ATP = dTDP + ADP. Its function is as follows. Phosphorylation of dTMP to form dTDP in both de novo and salvage pathways of dTTP synthesis. The protein is Thymidylate kinase of Haemophilus influenzae (strain PittGG).